The following is a 485-amino-acid chain: uncharacterized protein (485 aa).

The interval 151–201 (IKAPTNNSQSGDGNGGTNNDNLLGTFDIREKSNGKKGESNGKQGNGQDKKT) is disordered. Over residues 155–174 (TNNSQSGDGNGGTNNDNLLG) the composition is skewed to low complexity. The span at 177–189 (DIREKSNGKKGES) shows a compositional bias: basic and acidic residues.

The protein belongs to the MG185/MG260 family.

This is an uncharacterized protein from Mycoplasma pneumoniae (strain ATCC 29342 / M129 / Subtype 1) (Mycoplasmoides pneumoniae).